A 446-amino-acid chain; its full sequence is N-succinylarginine dihydrolase (446 aa).

Residues 19–28 (AGLSFGNVAS), Asn110, and 137–138 (HR) contribute to the substrate site. Glu174 is an active-site residue. Arg213 contacts substrate. The active site involves His249. The substrate site is built by Asp251 and Asn364. The active-site Nucleophile is Cys370.

Belongs to the succinylarginine dihydrolase family. Homodimer.

It catalyses the reaction N(2)-succinyl-L-arginine + 2 H2O + 2 H(+) = N(2)-succinyl-L-ornithine + 2 NH4(+) + CO2. It functions in the pathway amino-acid degradation; L-arginine degradation via AST pathway; L-glutamate and succinate from L-arginine: step 2/5. Catalyzes the hydrolysis of N(2)-succinylarginine into N(2)-succinylornithine, ammonia and CO(2). This chain is N-succinylarginine dihydrolase, found in Paraburkholderia xenovorans (strain LB400).